A 340-amino-acid polypeptide reads, in one-letter code: DNA-directed RNA polymerase subunit alpha (340 aa).

Residues 1 to 233 (MIQDEIKVST…DLFIPLINSE (233 aa)) are alpha N-terminal domain (alpha-NTD). The alpha C-terminal domain (alpha-CTD) stretch occupies residues 265 to 340 (TKDVAFKHIF…IQLPKNKNYL (76 aa)).

The protein belongs to the RNA polymerase alpha chain family. In plastids the minimal PEP RNA polymerase catalytic core is composed of four subunits: alpha, beta, beta', and beta''. When a (nuclear-encoded) sigma factor is associated with the core the holoenzyme is formed, which can initiate transcription.

The protein localises to the plastid. Its subcellular location is the chloroplast. It carries out the reaction RNA(n) + a ribonucleoside 5'-triphosphate = RNA(n+1) + diphosphate. Its function is as follows. DNA-dependent RNA polymerase catalyzes the transcription of DNA into RNA using the four ribonucleoside triphosphates as substrates. The chain is DNA-directed RNA polymerase subunit alpha from Marchantia polymorpha (Common liverwort).